A 213-amino-acid polypeptide reads, in one-letter code: Pyridoxine/pyridoxamine 5'-phosphate oxidase (213 aa).

Substrate-binding positions include 8 to 11 and K66; that span reads RKNY. FMN-binding positions include 61–66, 76–77, R82, K83, and Q105; these read RIVLIK and FT. 3 residues coordinate substrate: Y123, R127, and S131. Residues 140-141 and W184 each bind FMN; that span reads QS. 190-192 is a binding site for substrate; that stretch reads RLH. Residue R194 participates in FMN binding.

This sequence belongs to the pyridoxamine 5'-phosphate oxidase family. In terms of assembly, homodimer. It depends on FMN as a cofactor.

It carries out the reaction pyridoxamine 5'-phosphate + O2 + H2O = pyridoxal 5'-phosphate + H2O2 + NH4(+). It catalyses the reaction pyridoxine 5'-phosphate + O2 = pyridoxal 5'-phosphate + H2O2. The protein operates within cofactor metabolism; pyridoxal 5'-phosphate salvage; pyridoxal 5'-phosphate from pyridoxamine 5'-phosphate: step 1/1. It functions in the pathway cofactor metabolism; pyridoxal 5'-phosphate salvage; pyridoxal 5'-phosphate from pyridoxine 5'-phosphate: step 1/1. Its function is as follows. Catalyzes the oxidation of either pyridoxine 5'-phosphate (PNP) or pyridoxamine 5'-phosphate (PMP) into pyridoxal 5'-phosphate (PLP). The chain is Pyridoxine/pyridoxamine 5'-phosphate oxidase from Paraburkholderia xenovorans (strain LB400).